Consider the following 331-residue polypeptide: CMRF35-like molecule 9 (331 aa).

The N-terminal stretch at 1-18 (MRPLVLLWGCLVLPGYEA) is a signal peptide. The 102-residue stretch at 19 to 120 (LKGPKEISGF…LGRDESFEVT (102 aa)) folds into the Ig-like V-type domain. Residues 19–204 (LKGPKEISGF…KPSVSIPMVR (186 aa)) are Extracellular-facing. A disulfide bridge connects residues Cys-37 and Cys-106. O-linked (GalNAc...) threonine glycosylation is present at Thr-136. O-linked (GalNAc...) serine glycosylation is present at Ser-140. O-linked (GalNAc...) threonine glycosylation occurs at Thr-143. Ser-145 carries an O-linked (GalNAc...) serine glycan. O-linked (GalNAc...) threonine glycans are attached at residues Thr-150 and Thr-152. A glycan (O-linked (GalNAc...) serine) is linked at Ser-154. O-linked (GalNAc...) threonine glycans are attached at residues Thr-164, Thr-181, and Thr-182. Ser-186 carries O-linked (GalNAc...) serine glycosylation. A helical membrane pass occupies residues 205-225 (MMAPVLILLSLLLAAGLIAFG). Residues 226-331 (SHMLRWRKKA…ELAFSEFISV (106 aa)) are Cytoplasmic-facing. A compositionally biased stretch (polar residues) spans 278 to 293 (NPSAVPSPETQNLSQS). A disordered region spans residues 278–318 (NPSAVPSPETQNLSQSTEEEEAARSLDDDKEDVMAPPPLQM).

This sequence belongs to the CD300 family. O-glycosylated with sialylated oligosaccharides. In terms of tissue distribution, expressed in monocyte cell lines. Expressed in certain types of endothelial and myeloid lineage cells. Expressed in mesenteric lymph nodes (LNs), spleen, thymus, lung, heart and kidney. Expressed in high endothelial venules (HEVs) in peripheral and mesenteric LNs (at protein level). Highly expressed in heart. Slightly expressed in spleen and thymus. Isoform 5 is expressed preferentially in heart. Isoform 1 is expressed predominantly in kidney and liver.

It is found in the apical cell membrane. The protein localises to the basolateral cell membrane. The protein resides in the endosome. Its subcellular location is the multivesicular body membrane. In terms of biological role, receptor which may mediate L-selectin-dependent lymphocyte rollings. Binds SELL in a calcium dependent manner. Binds lymphocyte. This chain is CMRF35-like molecule 9 (Cd300lg), found in Mus musculus (Mouse).